The chain runs to 548 residues: Probable malate:quinone oxidoreductase (548 aa).

The segment at 521 to 548 (DKPQAADSTPKPQLKPKPVQKEVADIAL) is disordered. Over residues 539–548 (VQKEVADIAL) the composition is skewed to basic and acidic residues.

This sequence belongs to the MQO family. FAD serves as cofactor.

It carries out the reaction (S)-malate + a quinone = a quinol + oxaloacetate. It participates in carbohydrate metabolism; tricarboxylic acid cycle; oxaloacetate from (S)-malate (quinone route): step 1/1. This Escherichia coli (strain ATCC 8739 / DSM 1576 / NBRC 3972 / NCIMB 8545 / WDCM 00012 / Crooks) protein is Probable malate:quinone oxidoreductase.